The chain runs to 299 residues: 4-hydroxy-tetrahydrodipicolinate synthase 2 (299 aa).

Position 54 (T54) interacts with pyruvate. Y142 functions as the Proton donor/acceptor in the catalytic mechanism. The active-site Schiff-base intermediate with substrate is the K170. V210 contacts pyruvate.

The protein belongs to the DapA family. Homotetramer; dimer of dimers.

The protein localises to the cytoplasm. It carries out the reaction L-aspartate 4-semialdehyde + pyruvate = (2S,4S)-4-hydroxy-2,3,4,5-tetrahydrodipicolinate + H2O + H(+). The protein operates within amino-acid biosynthesis; L-lysine biosynthesis via DAP pathway; (S)-tetrahydrodipicolinate from L-aspartate: step 3/4. Functionally, catalyzes the condensation of (S)-aspartate-beta-semialdehyde [(S)-ASA] and pyruvate to 4-hydroxy-tetrahydrodipicolinate (HTPA). The sequence is that of 4-hydroxy-tetrahydrodipicolinate synthase 2 from Streptomyces coelicolor (strain ATCC BAA-471 / A3(2) / M145).